Consider the following 249-residue polypeptide: Tetraspanin-7 (249 aa).

Over 1–16 the chain is Cytoplasmic; it reads MASRRMETKPVITCLK. Residues 17–40 traverse the membrane as a helical segment; sequence TLLIIYSFVFWITGVILLAVGVWG. At 41-56 the chain is on the extracellular side; the sequence is KLTLGTYISLIAENST. Residue Asn54 is glycosylated (N-linked (GlcNAc...) asparagine). A helical membrane pass occupies residues 57–75; sequence NAPYVLIGTGTTIVVFGLF. The Cytoplasmic segment spans residues 76–86; sequence GCFATCRGSPW. Residues 87–112 form a helical membrane-spanning segment; it reads MLKLYAMFLSLVFLAELVAGISGFVF. Residues 113-213 lie on the Extracellular side of the membrane; it reads RHEIKDTFLR…LVTSFMETNM (101 aa). N-linked (GlcNAc...) asparagine glycans are attached at residues Asn155, Asn158, Asn177, and Asn188. A helical transmembrane segment spans residues 214–234; the sequence is GIIAGVAFGIAFSQLIGMLLA. Topologically, residues 235-249 are cytoplasmic; it reads CCLSRFITANQYEMV.

It belongs to the tetraspanin (TM4SF) family.

The protein resides in the membrane. In terms of biological role, may be involved in cell proliferation and cell motility. In Mus musculus (Mouse), this protein is Tetraspanin-7 (Tspan7).